Consider the following 226-residue polypeptide: Large ribosomal subunit protein uL1 (226 aa).

The protein belongs to the universal ribosomal protein uL1 family. As to quaternary structure, part of the 50S ribosomal subunit.

Functionally, binds directly to 23S rRNA. The L1 stalk is quite mobile in the ribosome, and is involved in E site tRNA release. In terms of biological role, protein L1 is also a translational repressor protein, it controls the translation of the L11 operon by binding to its mRNA. The sequence is that of Large ribosomal subunit protein uL1 from Treponema denticola (strain ATCC 35405 / DSM 14222 / CIP 103919 / JCM 8153 / KCTC 15104).